A 298-amino-acid polypeptide reads, in one-letter code: Lactose transport system permease protein LacF (298 aa).

6 helical membrane passes run 17 to 37 (GWLFVAPAIALISVFMLYPIL), 77 to 97 (VIFFVVQVPIMITMALILAAM), 112 to 132 (MIFLPCVSSLVAYSILFKSMF), 151 to 171 (PIGWLTDPFWAKVLIIIAITW), 208 to 228 (AFLTIPMLKPVILFTTITSTI), and 269 to 289 (FSYAATVSYVIVLMVAVLSFL). Residues 73-290 (LQNTVIFFVV…LMVAVLSFLQ (218 aa)) form the ABC transmembrane type-1 domain.

This sequence belongs to the binding-protein-dependent transport system permease family. MalFG subfamily.

It localises to the cell inner membrane. Its function is as follows. Part of the binding-protein-dependent transport system for lactose. Probably responsible for the translocation of the substrate across the membrane. The polypeptide is Lactose transport system permease protein LacF (lacF) (Rhizobium radiobacter (Agrobacterium tumefaciens)).